We begin with the raw amino-acid sequence, 475 residues long: Exodeoxyribonuclease 7 large subunit (475 aa).

It belongs to the XseA family. In terms of assembly, heterooligomer composed of large and small subunits.

Its subcellular location is the cytoplasm. It carries out the reaction Exonucleolytic cleavage in either 5'- to 3'- or 3'- to 5'-direction to yield nucleoside 5'-phosphates.. Its function is as follows. Bidirectionally degrades single-stranded DNA into large acid-insoluble oligonucleotides, which are then degraded further into small acid-soluble oligonucleotides. The chain is Exodeoxyribonuclease 7 large subunit from Bartonella henselae (strain ATCC 49882 / DSM 28221 / CCUG 30454 / Houston 1) (Rochalimaea henselae).